A 772-amino-acid chain; its full sequence is Magnetosome formation protease MamE (772 aa).

Over 1-21 the chain is Cytoplasmic; sequence MTMFNGDVEDGGRSNVSCGKD. A helical membrane pass occupies residues 22 to 42; that stretch reads LKRYLMLMGVVALVVLFGAFI. The Lumenal segment spans residues 43 to 772; sequence YRQSSGGLRL…RNGQEFWIVL (730 aa). Catalysis depends on charge relay system residues histidine 187, aspartate 220, and serine 296. The MCR (magnetochrome) 1 motif lies at 374–397; sequence IAAGTPSPHVDGRQNMDCSNCHDI. Cysteine 391, cysteine 394, histidine 395, cysteine 437, cysteine 440, histidine 441, cysteine 488, cysteine 491, and histidine 492 together coordinate heme. Short sequence motifs (MCR) lie at residues 420-443 and 470-494; these read IPAN…CHQF and AIRA…CHQI. One can recognise a Cytochrome c domain in the interval 445 to 558; sequence GGAAAGPIAF…ALTPLTQRLG (114 aa). PDZ domains are found at residues 522–626 and 696–765; these read AINI…LRAG and GATP…HRNG.

The protein in the N-terminal section; belongs to the peptidase S1C family. In terms of assembly, might interact with MamB via PDZ1. It depends on heme as a cofactor. The protein isolated from magnetosome membranes has a molecular weight of about 36.3 kDa, probably due to C-terminal cleavage. Subject to autocatalytic cleavage; cleavage also requires MamO; these may be the same event.

It localises to the magnetosome membrane. Functionally, acts at 2 distinct steps of magnetosome formation; required for correct localization of proteins to the magnetosome while the protease activity is required for maturation of small magnetite crystals into larger, functional ones. Probably cleaves at least itself, MamO and MamP; cleavage requires the putative transprot domain of MamO. Involved in localization of some proteins (at least MamA, MamC, MamF, MamI and MamJ) to the magnetosome. One of 7 genes (mamLQBIEMO) able to induce magnetosome membrane biogenesis; coexpression of mamLQRBIEMO in a deletion of the 17 gene mamAB operon restores magnetosome vesicle formation but not magnetite biosynthesis. This is Magnetosome formation protease MamE from Magnetospirillum gryphiswaldense (strain DSM 6361 / JCM 21280 / NBRC 15271 / MSR-1).